Reading from the N-terminus, the 340-residue chain is MEPGRTHIKLDPRYTAELLELLETNYSISPACFSHPPTAAQLLRALGPVDIALTIILTFLTTGSVAIFLEDAVYLYKNTLCPIKKRTLIWSSSAPTVVSVFCCFGLWIPRALTLVEMAITSFYAVCFYLLMMVMVEGFGGKKAVLRTLKDTPMRVHTGPCCCCCPCCPPLILTRKKLQLLLLGPFQYAFFKITLSIVGLFLIPDGIYDPGEISEKSAALWINNLLAVSTLLALWSLAILFRQAKMHLGEQNMGSKFALFQVLVILTALQPAIFSILANSGQIACSPPYSSKIRSQVMNCHMLILETFLMTVLTRMYYRRKDDKVGYEACSLPDLDSALKA.

The Extracellular portion of the chain corresponds to 1–48; that stretch reads MEPGRTHIKLDPRYTAELLELLETNYSISPACFSHPPTAAQLLRALGP. An N-linked (GlcNAc...) asparagine glycan is attached at Asn25. Residues 49 to 69 traverse the membrane as a helical segment; that stretch reads VDIALTIILTFLTTGSVAIFL. At 70 to 87 the chain is on the cytoplasmic side; sequence EDAVYLYKNTLCPIKKRT. A helical membrane pass occupies residues 88–108; that stretch reads LIWSSSAPTVVSVFCCFGLWI. Residues 109–114 are Extracellular-facing; it reads PRALTL. Residues 115-135 form a helical membrane-spanning segment; it reads VEMAITSFYAVCFYLLMMVMV. The Cytoplasmic segment spans residues 136–181; it reads EGFGGKKAVLRTLKDTPMRVHTGPCCCCCPCCPPLILTRKKLQLLL. A helical membrane pass occupies residues 182-202; it reads LGPFQYAFFKITLSIVGLFLI. Over 203–219 the chain is Extracellular; it reads PDGIYDPGEISEKSAAL. A helical transmembrane segment spans residues 220–240; it reads WINNLLAVSTLLALWSLAILF. Topologically, residues 241-255 are cytoplasmic; that stretch reads RQAKMHLGEQNMGSK. The chain crosses the membrane as a helical span at residues 256-276; it reads FALFQVLVILTALQPAIFSIL. Over 277 to 297 the chain is Extracellular; it reads ANSGQIACSPPYSSKIRSQVM. Residues 298–317 traverse the membrane as a helical segment; that stretch reads NCHMLILETFLMTVLTRMYY. Over 318–340 the chain is Cytoplasmic; it reads RRKDDKVGYEACSLPDLDSALKA. Phosphoserine is present on Ser330.

The protein belongs to the OST-alpha family. In terms of assembly, interacts with SLC51B. The Ost-alpha/Ost-beta complex is a heterodimer composed of alpha (SLC51A) and beta (SLC51B) subunit. N-glycosylated. In terms of tissue distribution, present at high levels in ileum. In ileum, it is restricted to the apical domain on the mature villus enterocytes with little detectable expression in the goblet cells or crypt enterocytes (at protein level). Expressed in kidney but not in heart, brain, liver, spleen, embryo, lung, thymus, ovary nor testis.

The protein resides in the cell membrane. Its subcellular location is the endoplasmic reticulum membrane. The catalysed reaction is taurocholate(out) = taurocholate(in). It carries out the reaction tauroursodeoxycholate(out) = tauroursodeoxycholate(in). The enzyme catalyses glycoursodeoxycholate(out) = glycoursodeoxycholate(in). It catalyses the reaction glycocholate(out) = glycocholate(in). The catalysed reaction is taurochenodeoxycholate(out) = taurochenodeoxycholate(in). It carries out the reaction glycochenodeoxycholate(out) = glycochenodeoxycholate(in). The enzyme catalyses taurodeoxycholate(out) = taurodeoxycholate(in). It catalyses the reaction glycodeoxycholate(out) = glycodeoxycholate(in). The catalysed reaction is prostaglandin E2(out) = prostaglandin E2(in). It carries out the reaction estrone 3-sulfate(out) = estrone 3-sulfate(in). The enzyme catalyses dehydroepiandrosterone 3-sulfate(out) = dehydroepiandrosterone 3-sulfate(in). In terms of biological role, essential component of the Ost-alpha/Ost-beta complex, a heterodimer that acts as the intestinal basolateral transporter responsible for bile acid export from enterocytes into portal blood. Efficiently transports the major species of bile acids (taurocholate). Taurine conjugates are transported more efficiently across the basolateral membrane than glycine-conjugated bile acids. Can also transport steroids such as estrone 3-sulfate and dehydroepiandrosterone 3-sulfate, therefore playing a role in the enterohepatic circulation of sterols. Able to transport eicosanoids such as prostaglandin E2. This Mus musculus (Mouse) protein is Organic solute transporter subunit alpha (Slc51a).